A 131-amino-acid polypeptide reads, in one-letter code: Small ribosomal subunit protein uS8 (131 aa).

The protein belongs to the universal ribosomal protein uS8 family. In terms of assembly, part of the 30S ribosomal subunit. Contacts proteins S5 and S12.

Its function is as follows. One of the primary rRNA binding proteins, it binds directly to 16S rRNA central domain where it helps coordinate assembly of the platform of the 30S subunit. The protein is Small ribosomal subunit protein uS8 of Bacteroides thetaiotaomicron (strain ATCC 29148 / DSM 2079 / JCM 5827 / CCUG 10774 / NCTC 10582 / VPI-5482 / E50).